Reading from the N-terminus, the 617-residue chain is UvrABC system protein C (617 aa).

Residues 11-85 form the GIY-YIG domain; it reads TTPGVYIFRK…IKQHRPHYNV (75 aa). A UVR domain is found at 194 to 229; it reads APVIARLKEDMKVAAQGQDFEQAARLRDRVQAVEKL.

Belongs to the UvrC family. As to quaternary structure, interacts with UvrB in an incision complex.

It is found in the cytoplasm. Its function is as follows. The UvrABC repair system catalyzes the recognition and processing of DNA lesions. UvrC both incises the 5' and 3' sides of the lesion. The N-terminal half is responsible for the 3' incision and the C-terminal half is responsible for the 5' incision. The protein is UvrABC system protein C of Deinococcus radiodurans (strain ATCC 13939 / DSM 20539 / JCM 16871 / CCUG 27074 / LMG 4051 / NBRC 15346 / NCIMB 9279 / VKM B-1422 / R1).